The primary structure comprises 342 residues: Ketol-acid reductoisomerase (NADP(+)) (342 aa).

One can recognise a KARI N-terminal Rossmann domain in the interval 2-181; it reads VKVYYNGDIK…GGARAGVLET (180 aa). Residues 25-28, Arg48, Ser52, and 82-85 contribute to the NADP(+) site; these read YGSQ and DEQQ. His107 is a catalytic residue. Residue Gly133 coordinates NADP(+). The KARI C-terminal knotted domain occupies 182–327; it reads TFKEETETDL…RQLREMMPFV (146 aa). Mg(2+)-binding residues include Asp190, Glu194, Glu226, and Glu230. Ser251 lines the substrate pocket.

It belongs to the ketol-acid reductoisomerase family. Requires Mg(2+) as cofactor.

It catalyses the reaction (2R)-2,3-dihydroxy-3-methylbutanoate + NADP(+) = (2S)-2-acetolactate + NADPH + H(+). It carries out the reaction (2R,3R)-2,3-dihydroxy-3-methylpentanoate + NADP(+) = (S)-2-ethyl-2-hydroxy-3-oxobutanoate + NADPH + H(+). It functions in the pathway amino-acid biosynthesis; L-isoleucine biosynthesis; L-isoleucine from 2-oxobutanoate: step 2/4. It participates in amino-acid biosynthesis; L-valine biosynthesis; L-valine from pyruvate: step 2/4. Its function is as follows. Involved in the biosynthesis of branched-chain amino acids (BCAA). Catalyzes an alkyl-migration followed by a ketol-acid reduction of (S)-2-acetolactate (S2AL) to yield (R)-2,3-dihydroxy-isovalerate. In the isomerase reaction, S2AL is rearranged via a Mg-dependent methyl migration to produce 3-hydroxy-3-methyl-2-ketobutyrate (HMKB). In the reductase reaction, this 2-ketoacid undergoes a metal-dependent reduction by NADPH to yield (R)-2,3-dihydroxy-isovalerate. This chain is Ketol-acid reductoisomerase (NADP(+)), found in Bacillus velezensis (strain DSM 23117 / BGSC 10A6 / LMG 26770 / FZB42) (Bacillus amyloliquefaciens subsp. plantarum).